A 482-amino-acid chain; its full sequence is MPMDVRGCLFPSVQMLLCWLVSLLLATVGGKEVCYGHLGCFSNDKPWAGMIQRPSKIFPWSPEDIDTRFLLYTNENPNNYQIISATDPATINASNFQLDRKTRFIIHGFIDKGEEGWLLDMCKKMFQVEKVNCICVDWKRGSRTEYTQASYNTRVVGAEIAFLVQVLSTEMGYSPENVHLIGHSLGSHVAGEAGRRLEGHVGRITGLDPAEPCFQGLPEEVRLDPSDAMFVDVIHTDSAPIIPYLGFGMSQKVGHLDFFPNGGKEMPGCQKNILSTIVDINGIWEGTRNFAACNHLRSYKYYASSILNPDGFLGYPCSSYEKFQHNDCFPCPEQGCPKMGHYADQFEGKTATVEQTFFLNTGDSGNFTRWRYKVSVTLSGAKKLSGYILVALYGCNGNSKQYEVFKGSLQPEARYIRDIDVDVNVGEIQKVKFLWNNKVINLFRPTMGASQITVQRGKDGKEFNFCSSNTVHEDVLQSLYPC.

Residues 1-30 (MPMDVRGCLFPSVQMLLCWLVSLLLATVGG) form the signal peptide. Cys-34 and Cys-40 form a disulfide bridge. A glycan (N-linked (GlcNAc...) asparagine) is linked at Asn-92. The interval 106–118 (IHGFIDKGEEGWL) is required for galactolipase activity. Cys-122 and Cys-133 are disulfide-bonded. The Nucleophile role is filled by Ser-184. Asp-208 serves as the catalytic Charge relay system. Ca(2+) contacts are provided by Glu-219, Arg-222, Asp-224, and Asp-227. Cysteines 269 and 293 form a disulfide. Positions 270–292 (QKNILSTIVDINGIWEGTRNFAA) are required for galactolipase activity. The active-site Charge relay system is the His-295. 2 cysteine pairs are disulfide-bonded: Cys-317-Cys-328 and Cys-331-Cys-336. 2 N-linked (GlcNAc...) asparagine glycosylation sites follow: Asn-366 and Asn-441. A PLAT domain is found at 370 to 482 (WRYKVSVTLS…EDVLQSLYPC (113 aa)). A disulfide bond links Cys-466 and Cys-482.

It belongs to the AB hydrolase superfamily. Lipase family. As to expression, expressed in acinar cells of pancreas (at protein level).

The protein resides in the secreted. Its subcellular location is the zymogen granule membrane. The protein localises to the cell projection. It localises to the neuron projection. It catalyses the reaction a triacylglycerol + H2O = a diacylglycerol + a fatty acid + H(+). The enzyme catalyses a 1,2-diacyl-3-O-(beta-D-galactosyl)-sn-glycerol + 2 H2O = 3-beta-D-galactosyl-sn-glycerol + 2 a fatty acid + 2 H(+). The catalysed reaction is 1,2,3-tri-(9Z-octadecenoyl)-glycerol + H2O = di-(9Z)-octadecenoylglycerol + (9Z)-octadecenoate + H(+). It carries out the reaction di-(9Z)-octadecenoylglycerol + H2O = (9Z-octadecenoyl)-glycerol + (9Z)-octadecenoate + H(+). It catalyses the reaction (9Z-octadecenoyl)-glycerol + H2O = glycerol + (9Z)-octadecenoate + H(+). The enzyme catalyses 1-(9Z-octadecenoyl)-glycerol + H2O = glycerol + (9Z)-octadecenoate + H(+). The catalysed reaction is 1,2,3-tripropanoylglycerol + H2O = dipropanoylglycerol + propanoate + H(+). It carries out the reaction 1,2,3-tributanoylglycerol + H2O = dibutanoylglycerol + butanoate + H(+). It catalyses the reaction 1,2,3-trioctanoylglycerol + H2O = dioctanoylglycerol + octanoate + H(+). The enzyme catalyses 1,2-didecanoylglycerol + H2O = decanoylglycerol + decanoate + H(+). The catalysed reaction is long chain 1,2-diacyl-3-O-beta-D-galactosyl-sn-glycerol + H2O = long chain acyl-3-O-beta-D-galactosyl-sn-glycerol + a fatty acid + H(+). It carries out the reaction 1,2-dioctanoyl-3-O-beta-D-galactosyl-sn-glycerol + H2O = octanoyl-3-(beta-D-galactosyl)-sn-glycerol + octanoate + H(+). It catalyses the reaction 1,2-didodecanoyl-3-beta-D-galactosyl-sn-glycerol + H2O = dodecanoyl-3-beta-D-galactosyl-sn-glycerol + dodecanoate + H(+). The enzyme catalyses 1-beta-D-galactosyl-2,3-didodecanoyl-sn-glycerol + H2O = 1-beta-D-galactosyl-dodecanoyl-sn-glycerol + dodecanoate + H(+). The catalysed reaction is a 1,2-diacyl-3-O-[alpha-D-galactosyl-(1-&gt;6)-beta-D-galactosyl]-sn-glycerol + H2O = acyl-3-O-[alpha-D-galactosyl-(1-&gt;6)-beta-D-galactosyl]-sn-glycerol + a fatty acid + H(+). It carries out the reaction long chain 1,2-diacyl-3-O-[alpha-D-galactosyl-(1-&gt;6)-beta-D-galactosyl]-sn-glycerol + H2O = long chain acyl-3-O-[alpha-D-galactosyl-(1-&gt;6)-beta-D-galactosyl]-sn-glycerol + a fatty acid + H(+). It catalyses the reaction 1,2-dioctanoyl-3-O-[alpha-D-galactosyl-(1-&gt;6)-beta-D-galactosyl]-sn-glycerol + H2O = octanoyl-3-O-[alpha-D-galactosyl-(1-&gt;6)-beta-D-galactosyl]-sn-glycerol + octanoate + H(+). The enzyme catalyses 1,2-didodecanoyl-3-O-[alpha-D-galactosyl-(1-&gt;6)-beta-D-galactosyl]-sn-glycerol + H2O = dodecanoyl-3-O-[alpha-D-galactosyl-(1-&gt;6)-beta-D-galactosyl]-sn-glycerol + dodecanoate + H(+). The catalysed reaction is a 1,2-diacyl-sn-glycero-3-phosphocholine + H2O = a monoacyl-sn-glycero-3-phosphocholine + a fatty acid + H(+). Its pathway is glycerolipid metabolism; triacylglycerol degradation. It functions in the pathway glycolipid metabolism. CLPS stimulates triacylglycerol lipase activity. Triacylglycerol lipase activity is not inhibited by increasing bile salt concentration. Its function is as follows. Lipase that primarily hydrolyzes triglycerides and galactosylglycerides. In neonates, may play a major role in pancreatic digestion of dietary fats such as milk fat globules enriched in long-chain triglycerides. Hydrolyzes short-, medium- and long-chain fatty acyls in triglycerides without apparent positional specificity. Can completely deacylate triacylglycerols. When the liver matures and bile salt synthesis increases, likely functions mainly as a galactolipase and monoacylglycerol lipase. Hydrolyzes monogalactosyldiglycerols (MGDG) and digalactosyldiacylglycerols (DGDG) present in a plant-based diet, releasing long-chain polyunsaturated fatty acids. Hydrolyzes medium- and long-chain fatty acyls in galactolipids. May act together with LIPF to hydrolyze partially digested triglycerides. Hydrolyzes long-chain monoglycerides with high efficiency. In cytotoxic T cells, contributes to perforin-dependent cell lysis, but is unlikely to mediate direct cytotoxicity. Also has low phospholipase activity. In neurons, required for the localization of the phospholipid 1-oleoyl-2-palmitoyl-PC (OPPC) to neurite tips through acyl chain remodeling of membrane phospholipids. The resulting OPPC-rich lipid membrane domain recruits the t-SNARE protein STX4 by selectively interacting with the STX4 transmembrane domain and this promotes surface expression of the dopamine transporter SLC6A3/DAT at neurite tips by facilitating fusion of SLC6A3-containing transport vesicles with the plasma membrane. This is Pancreatic lipase-related protein 2 from Mus musculus (Mouse).